Here is a 660-residue protein sequence, read N- to C-terminus: Bifunctional polymyxin resistance protein ArnA (660 aa).

The interval 1-304 is formyltransferase ArnAFT; it reads MKAVIFAYHD…TLGLVAGARL (304 aa). Residue His104 is the Proton donor; for formyltransferase activity of the active site. Residues Arg114 and 136 to 140 contribute to the (6R)-10-formyltetrahydrofolate site; that span reads VKRAD. The dehydrogenase ArnADH stretch occupies residues 314–660; it reads RRIRVLILGV…RSVDVAERAS (347 aa). Residues Asp347 and 368 to 369 each bind NAD(+); that span reads DI. UDP-alpha-D-glucuronate is bound by residues Ala393, Tyr398, and 432–433; that span reads TS. Residue Glu434 is the Proton acceptor; for decarboxylase activity of the active site. UDP-alpha-D-glucuronate is bound by residues Arg460, Asn492, 526–535, and Tyr613; that span reads KLIDGGQQKR. Catalysis depends on Arg619, which acts as the Proton donor; for decarboxylase activity.

In the N-terminal section; belongs to the Fmt family. UDP-L-Ara4N formyltransferase subfamily. This sequence in the C-terminal section; belongs to the NAD(P)-dependent epimerase/dehydratase family. UDP-glucuronic acid decarboxylase subfamily. Homohexamer, formed by a dimer of trimers.

It carries out the reaction UDP-alpha-D-glucuronate + NAD(+) = UDP-beta-L-threo-pentopyranos-4-ulose + CO2 + NADH. The catalysed reaction is UDP-4-amino-4-deoxy-beta-L-arabinose + (6R)-10-formyltetrahydrofolate = UDP-4-deoxy-4-formamido-beta-L-arabinose + (6S)-5,6,7,8-tetrahydrofolate + H(+). It participates in nucleotide-sugar biosynthesis; UDP-4-deoxy-4-formamido-beta-L-arabinose biosynthesis; UDP-4-deoxy-4-formamido-beta-L-arabinose from UDP-alpha-D-glucuronate: step 1/3. The protein operates within nucleotide-sugar biosynthesis; UDP-4-deoxy-4-formamido-beta-L-arabinose biosynthesis; UDP-4-deoxy-4-formamido-beta-L-arabinose from UDP-alpha-D-glucuronate: step 3/3. It functions in the pathway bacterial outer membrane biogenesis; lipopolysaccharide biosynthesis. Bifunctional enzyme that catalyzes the oxidative decarboxylation of UDP-glucuronic acid (UDP-GlcUA) to UDP-4-keto-arabinose (UDP-Ara4O) and the addition of a formyl group to UDP-4-amino-4-deoxy-L-arabinose (UDP-L-Ara4N) to form UDP-L-4-formamido-arabinose (UDP-L-Ara4FN). The modified arabinose is attached to lipid A and is required for resistance to polymyxin and cationic antimicrobial peptides. This Salmonella dublin (strain CT_02021853) protein is Bifunctional polymyxin resistance protein ArnA.